Here is a 958-residue protein sequence, read N- to C-terminus: Structure-specific endonuclease subunit SLX4 (958 aa).

Disordered stretches follow at residues 89 to 123 (AESPIKSGVEGPTLPLGGDKKKPRTAGARKKKGKT), 183 to 209 (QKKAETVSRHFTPHTSAPPELVAGPID), 326 to 400 (LATA…LSPT), 531 to 589 (DLTI…EQHQ), 594 to 613 (QSNTPQQPQPAPPPPPSFEL), and 655 to 849 (STAA…SPPA). Residues 109-121 (KKPRTAGARKKKG) are compositionally biased toward basic residues. Residues 332–341 (RRPEEAERST) are compositionally biased toward basic and acidic residues. Residues 342–351 (LSRQQDTHIP) are compositionally biased toward polar residues. Positions 364-373 (AASKSASAKP) are enriched in low complexity. The segment covering 374–389 (KAAKKAPKPRATKKKQ) has biased composition (basic residues). Pro residues predominate over residues 600–610 (QPQPAPPPPPS). 3 stretches are compositionally biased toward low complexity: residues 655-666 (STAAQAAMSTSA), 775-787 (TTSPATRATRAKA), and 821-838 (PDSGSDDPFASSAPSSPD).

The protein belongs to the SLX4 family. Forms a heterodimer with SLX1. In terms of processing, phosphorylated in response to DNA damage.

Its subcellular location is the nucleus. In terms of biological role, regulatory subunit of the SLX1-SLX4 structure-specific endonuclease that resolves DNA secondary structures generated during DNA repair and recombination. Has endonuclease activity towards branched DNA substrates, introducing single-strand cuts in duplex DNA close to junctions with ss-DNA. This Chaetomium globosum (strain ATCC 6205 / CBS 148.51 / DSM 1962 / NBRC 6347 / NRRL 1970) (Soil fungus) protein is Structure-specific endonuclease subunit SLX4.